Reading from the N-terminus, the 147-residue chain is Large ribosomal subunit protein uL13 (147 aa).

Belongs to the universal ribosomal protein uL13 family. As to quaternary structure, part of the 50S ribosomal subunit.

In terms of biological role, this protein is one of the early assembly proteins of the 50S ribosomal subunit, although it is not seen to bind rRNA by itself. It is important during the early stages of 50S assembly. The polypeptide is Large ribosomal subunit protein uL13 (Pseudarthrobacter chlorophenolicus (strain ATCC 700700 / DSM 12829 / CIP 107037 / JCM 12360 / KCTC 9906 / NCIMB 13794 / A6) (Arthrobacter chlorophenolicus)).